The sequence spans 135 residues: Ribonuclease P protein component (135 aa).

This sequence belongs to the RnpA family. Consists of a catalytic RNA component (M1 or rnpB) and a protein subunit.

It catalyses the reaction Endonucleolytic cleavage of RNA, removing 5'-extranucleotides from tRNA precursor.. Functionally, RNaseP catalyzes the removal of the 5'-leader sequence from pre-tRNA to produce the mature 5'-terminus. It can also cleave other RNA substrates such as 4.5S RNA. The protein component plays an auxiliary but essential role in vivo by binding to the 5'-leader sequence and broadening the substrate specificity of the ribozyme. This is Ribonuclease P protein component from Xylella fastidiosa (strain 9a5c).